The chain runs to 995 residues: Pheromone-regulated membrane protein 10 (995 aa).

4 disordered regions span residues 1–217, 253–299, 326–407, and 425–508; these read MSSH…GEKH, GRVL…AVEM, DQSF…YIAP, and NPQD…NPDQ. Over residues 74-88 the composition is skewed to low complexity; the sequence is SNSSTTNNSTESSGS. Over residues 110 to 121 the composition is skewed to basic and acidic residues; it reads VKGESGDAHEGS. Residues 157-166 are compositionally biased toward low complexity; it reads SRGSVGSSSS. Residues 170–187 are compositionally biased toward basic and acidic residues; it reads KGSDDVNEKETNLDHDYD. The segment covering 259 to 269 has biased composition (gly residues); the sequence is GSGGGGGGGLI. Residues 283 to 296 show a composition bias toward acidic residues; sequence EEKEVGGGGEDDGA. Polar residues predominate over residues 326 to 347; sequence DQSFTYDEPNQSAGSSRNSTAP. Basic and acidic residues-rich tracts occupy residues 359-371 and 385-396; these read DDHKHTDDEDQGK and GNDDPEDQHLLL. Residues 495-506 show a composition bias toward acidic residues; it reads EADDEDEDEENP. 10 consecutive transmembrane segments (helical) span residues 678-698, 700-720, 726-746, 752-772, 794-814, 833-850, 858-878, 881-901, 906-926, and 965-985; these read VFLYGFGSAMVCPFAFGGGWL, IPVTFGVGLCVGYLQFFVSSM, SVFEITASIVVSFIARGIGSI, FCFSAIAQGSLALILPGYIIL, IIYSLFLGFGITLGAALFGWV, KYRILFVPMFTICLGLIN, PVMMVISCTGYVGTYFAGKHF, VPEFTAAIGAFIVGILGNVYS, GMAVSAMLPAIFVQVPSGIAS, and VEVSIGISVGLFAAALVVYPF.

This sequence belongs to the ThrE exporter (TC 2.A.79) family.

It is found in the membrane. This chain is Pheromone-regulated membrane protein 10, found in Pichia sorbitophila (strain ATCC MYA-4447 / BCRC 22081 / CBS 7064 / NBRC 10061 / NRRL Y-12695) (Hybrid yeast).